The chain runs to 71 residues: Alpha-elapitoxin-Nn3a (71 aa).

Cystine bridges form between Cys3–Cys20, Cys14–Cys42, Cys26–Cys30, Cys46–Cys56, and Cys57–Cys62.

This sequence belongs to the three-finger toxin family. Long-chain subfamily. Type II alpha-neurotoxin sub-subfamily. In terms of tissue distribution, expressed by the venom gland.

The protein localises to the secreted. Its function is as follows. Nicotinic acetylcholine receptor antagonist. Binds to muscle nicotinic acetylcholine receptor (nAChR) and inhibits acetylcholine from binding to the receptor, thereby impairing neuromuscular transmission. Produces peripheral paralysis by blocking neuromuscular transmission at the postsynaptic site. Induces concentration-dependent inhibition of indirect twitches and abolishes contractile responses of tissues to exogenous acetylcholine and carbachol, in the chick biventer cervicis nerve-muscle preparation at 100-300 nM (in vitro). Prior incubation of tissues with Indian polyvalent antivenom (1 ml/0.6 mg) prevents the neurotoxic effects at 100 nM (in vitro). Addition of Indian polyvalent antivenom (1 ml/0.6 mg) at the t90 time point partially restores the neurotoxic effects (in vitro). Displays a reversible antagonism of concentration-response curves to carbachol, with a pA2 of 8.17 (in vitro). This Naja naja (Indian cobra) protein is Alpha-elapitoxin-Nn3a.